The primary structure comprises 426 residues: MKDCFPQGLNGKKTAVALSGGLDSVVLLHLLVRAGKKGGFIPDALHIHHGLSPRADDWADFCQNYCDMLGVGLETVKVCVEKNGLGIEAAARQKRYAAFAEKGFDVLALAHHRDDQIETFMLAVARGGGLRALAAMPAVRPFGEKGIIWRPLLPFSRQDIWDYAQKHGLPNIEDESNTDTAYLRNRFRHRILPELSAQIPHFGRHVLNNVRALQEDLALLDEVVVQDCRWVCGAGYFDTARWLTFSPRRKTHILRHFLKENGIPVPNQNALADIARVLTEAKTGRWNLQGFELHHYAGRLFVFRLEKTDKLRFLKDRQISGNLREILTGQGFVLKRHPFGLPEHLLEQDGILRTVAASDTLAMGGIHKDVKKILQGKRVLPVLRPIWPLVADSGNRPLALANCCADFQYSVSDGILPVHPDFPILF.

19 to 24 (SGGLDS) lines the ATP pocket.

Belongs to the tRNA(Ile)-lysidine synthase family.

The protein localises to the cytoplasm. The enzyme catalyses cytidine(34) in tRNA(Ile2) + L-lysine + ATP = lysidine(34) in tRNA(Ile2) + AMP + diphosphate + H(+). Ligates lysine onto the cytidine present at position 34 of the AUA codon-specific tRNA(Ile) that contains the anticodon CAU, in an ATP-dependent manner. Cytidine is converted to lysidine, thus changing the amino acid specificity of the tRNA from methionine to isoleucine. The sequence is that of tRNA(Ile)-lysidine synthase from Neisseria meningitidis serogroup A / serotype 4A (strain DSM 15465 / Z2491).